A 160-amino-acid polypeptide reads, in one-letter code: Zinc finger A20 and AN1 domain-containing stress-associated protein 5 (160 aa).

The A20-type zinc finger occupies Thr20 to Ala54. Residues Cys26, Cys30, Cys42, Cys45, Cys101, Cys104, Cys115, Cys117, Cys122, His125, His131, and Cys133 each contribute to the Zn(2+) site. An AN1-type zinc finger spans residues Gln95–Gly141.

Its function is as follows. May be involved in environmental stress response. The chain is Zinc finger A20 and AN1 domain-containing stress-associated protein 5 (SAP5) from Arabidopsis thaliana (Mouse-ear cress).